The chain runs to 362 residues: Chorismate synthase (362 aa).

Arg-48 and Arg-54 together coordinate NADP(+). FMN-binding positions include 125–127 (RSS), 237–238 (NA), Gly-277, 292–296 (KPTSS), and Arg-318.

This sequence belongs to the chorismate synthase family. In terms of assembly, homotetramer. FMNH2 serves as cofactor.

It catalyses the reaction 5-O-(1-carboxyvinyl)-3-phosphoshikimate = chorismate + phosphate. It functions in the pathway metabolic intermediate biosynthesis; chorismate biosynthesis; chorismate from D-erythrose 4-phosphate and phosphoenolpyruvate: step 7/7. Functionally, catalyzes the anti-1,4-elimination of the C-3 phosphate and the C-6 proR hydrogen from 5-enolpyruvylshikimate-3-phosphate (EPSP) to yield chorismate, which is the branch point compound that serves as the starting substrate for the three terminal pathways of aromatic amino acid biosynthesis. This reaction introduces a second double bond into the aromatic ring system. In Idiomarina loihiensis (strain ATCC BAA-735 / DSM 15497 / L2-TR), this protein is Chorismate synthase.